We begin with the raw amino-acid sequence, 360 residues long: Luc7-like protein (360 aa).

Positions 143-206 (KEQNSKITEL…QEKNENKRMS (64 aa)) form a coiled coil. The tract at residues 255–360 (LGRTDFYNAP…DDRRKRDRNY (106 aa)) is disordered. The span at 269–293 (DSYRDDRRSSSSSYHDIDGRRDHRY) shows a compositional bias: basic and acidic residues. The segment covering 312-321 (NNGRGSSRDN) has biased composition (low complexity). Basic and acidic residues predominate over residues 329-360 (RDYRNDHGKDYDRKRERDYYNDDDRRKRDRNY).

The protein belongs to the Luc7 family.

Its subcellular location is the nucleus. Its function is as follows. May play a role in RNA splicing. This chain is Luc7-like protein (crop), found in Dictyostelium discoideum (Social amoeba).